Reading from the N-terminus, the 237-residue chain is Sugar fermentation stimulation protein homolog (237 aa).

This sequence belongs to the SfsA family.

This chain is Sugar fermentation stimulation protein homolog, found in Pseudomonas putida (strain ATCC 47054 / DSM 6125 / CFBP 8728 / NCIMB 11950 / KT2440).